The chain runs to 333 residues: Nucleoid-associated protein PSPTO_1265 (333 aa).

Belongs to the YejK family.

It is found in the cytoplasm. It localises to the nucleoid. This chain is Nucleoid-associated protein PSPTO_1265, found in Pseudomonas syringae pv. tomato (strain ATCC BAA-871 / DC3000).